The sequence spans 786 residues: Mitochondrial intermediate peptidase (786 aa).

A mitochondrion-targeting transit peptide spans 1–29 (MSSILLRSYRHHAKVWTRPSSKSSFIRSL). His567 is a Zn(2+) binding site. Glu568 is a catalytic residue. His571 and His574 together coordinate Zn(2+).

This sequence belongs to the peptidase M3 family. Zn(2+) is required as a cofactor.

Its subcellular location is the mitochondrion matrix. It carries out the reaction Release of an N-terminal octapeptide as second stage of processing of some proteins imported into the mitochondrion.. Cleaves proteins, imported into the mitochondrion, to their mature size. While most mitochondrial precursor proteins are processed to the mature form in one step by mitochondrial processing peptidase (MPP), the sequential cleavage by MIP of an octapeptide after initial processing by MPP is a required step for a subgroup of nuclear-encoded precursor proteins destined for the matrix or the inner membrane. The protein is Mitochondrial intermediate peptidase (OCT1) of Meyerozyma guilliermondii (strain ATCC 6260 / CBS 566 / DSM 6381 / JCM 1539 / NBRC 10279 / NRRL Y-324) (Yeast).